Here is a 288-residue protein sequence, read N- to C-terminus: Bifunctional protein FolD (288 aa).

Residues 165–167 (GRS), S190, and I231 contribute to the NADP(+) site.

Belongs to the tetrahydrofolate dehydrogenase/cyclohydrolase family. In terms of assembly, homodimer.

It carries out the reaction (6R)-5,10-methylene-5,6,7,8-tetrahydrofolate + NADP(+) = (6R)-5,10-methenyltetrahydrofolate + NADPH. The enzyme catalyses (6R)-5,10-methenyltetrahydrofolate + H2O = (6R)-10-formyltetrahydrofolate + H(+). It functions in the pathway one-carbon metabolism; tetrahydrofolate interconversion. In terms of biological role, catalyzes the oxidation of 5,10-methylenetetrahydrofolate to 5,10-methenyltetrahydrofolate and then the hydrolysis of 5,10-methenyltetrahydrofolate to 10-formyltetrahydrofolate. This Nitrosospira multiformis (strain ATCC 25196 / NCIMB 11849 / C 71) protein is Bifunctional protein FolD.